We begin with the raw amino-acid sequence, 826 residues long: Arsenite oxidase subunit AioA (826 aa).

Cys-22, Cys-25, and Cys-29 together coordinate [3Fe-4S] cluster. Residues His-196, Glu-204, Arg-420, and His-424 each contribute to the substrate site.

This sequence belongs to the prokaryotic molybdopterin-containing oxidoreductase family. In terms of assembly, heterodimer consisting of a large and a small subunit. [3Fe-4S] cluster is required as a cofactor. The cofactor is Mo-bis(molybdopterin guanine dinucleotide).

The enzyme catalyses 2 oxidized [azurin] + arsenite + H2O = 2 reduced [azurin] + arsenate + 3 H(+). Its function is as follows. Involved in the detoxification of arsenic. Oxidizes As(III)O3(3-) (arsenite) to the somewhat less toxic As(V)O4(3-) (arsenate). This chain is Arsenite oxidase subunit AioA (aioA), found in Alcaligenes faecalis.